Here is a 3072-residue protein sequence, read N- to C-terminus: Eukaryotic translation initiation factor 2-alpha kinase PK4 (3072 aa).

The Cytoplasmic segment spans residues 1 to 106 (MCNFIKKGIR…EFRWLINKLE (106 aa)). A helical membrane pass occupies residues 107–127 (IIYFYFFCHLLLLCIFQNIFL). Residues 128–1643 (LTYMSKEYFL…FTSIRYKRRR (1516 aa)) are Lumenal-facing. The interval 383-402 (KEKCHRDEKCDRGENYDRGE) is disordered. Residues 576-610 (KKKILDENDMITIDNNIDKKENILFPYFHMEILKD) form a 10 X 7 AA tandem repeat of D-K-N-[GE]-L-D-[GD] region. The interval 970 to 1010 (QYEDNNDNDNNKNDNNKNDNNKNDNNKNDNNNNNNNNNNNS) is disordered. Over residues 978–996 (DNNKNDNNKNDNNKNDNNK) the composition is skewed to basic and acidic residues. Positions 997–1009 (NDNNNNNNNNNNN) are enriched in low complexity. A helical membrane pass occupies residues 1644–1664 (WYWRVFYTIMFIIFFPVLFIY). Over 1665-3072 (RRIIKRRKGS…IKNENNGADK (1408 aa)) the chain is Cytoplasmic. 2 disordered regions span residues 1737–1766 (KNYN…SKSN) and 1917–1937 (KVGS…KDKK). Residues 1738–1766 (NYNNNNNNNNNKNNNNISNNNSNSNSKSN) show a composition bias toward low complexity. Residues 1928–1937 (NYTDNEKDKK) show a composition bias toward basic and acidic residues. Residues 2152 to 2160 (IGQGGFGSV) and Lys-2177 contribute to the ATP site. 3 disordered regions span residues 2316-2402 (FYSD…EGRD), 2479-2558 (RNED…KKLD), and 2691-2749 (ENDD…DDDI). The span at 2326 to 2335 (KNKENPEKNH) shows a compositional bias: basic and acidic residues. A compositionally biased stretch (basic residues) spans 2362-2384 (HKLKKRKNKKKKSKKKRKSKSKI). 10 consecutive repeat copies span residues 2483-2489 (DKNGLDG), 2490-2496 (DKNGLDG), 2497-2503 (DKNGLDG), 2504-2510 (DKNGLDG), 2511-2517 (DKNGLDG), 2518-2524 (DKNELDG), 2525-2531 (DKNGLDG), 2532-2538 (DKNGLDG), 2539-2545 (DKNGLDG), and 2546-2552 (DKNELDD). The Protein kinase domain occupies 2627–2998 (TNVESINTNG…KIKVLLDPHL (372 aa)). A compositionally biased stretch (acidic residues) spans 2692–2702 (NDDDDDDDDDN). Asp-2835 functions as the Proton acceptor in the catalytic mechanism. At Thr-2902 the chain carries Phosphothreonine.

The protein belongs to the protein kinase superfamily. Ser/Thr protein kinase family. GCN2 subfamily. In terms of assembly, may form oligomers in response to stress; oligomerization may result in catalytic activity. Interacts with BIP; the interaction is disrupted in response to stress. Post-translationally, auto-phosphorylated.

Its subcellular location is the endoplasmic reticulum membrane. It carries out the reaction L-seryl-[protein] + ATP = O-phospho-L-seryl-[protein] + ADP + H(+). The catalysed reaction is L-threonyl-[protein] + ATP = O-phospho-L-threonyl-[protein] + ADP + H(+). Its activity is regulated as follows. Dissociation from BIP and oligomerization, may results autophosphorylation and kinase activity induction. Functionally, during the asexual blood stage, phosphorylates translation factor eIF2alpha in late schizonts resulting in protein translation inhibition. Plays a role in trophozoite differentiation into schizonts. This is Eukaryotic translation initiation factor 2-alpha kinase PK4 from Plasmodium falciparum (isolate 3D7).